The primary structure comprises 190 residues: Protein GrpE (190 aa).

Basic and acidic residues predominate over residues 1 to 26 (MADKEKDAVIVDETEHVDVDSKESKK). The tract at residues 1–31 (MADKEKDAVIVDETEHVDVDSKESKKEKKTK) is disordered.

It belongs to the GrpE family. In terms of assembly, homodimer.

Its subcellular location is the cytoplasm. Participates actively in the response to hyperosmotic and heat shock by preventing the aggregation of stress-denatured proteins, in association with DnaK and GrpE. It is the nucleotide exchange factor for DnaK and may function as a thermosensor. Unfolded proteins bind initially to DnaJ; upon interaction with the DnaJ-bound protein, DnaK hydrolyzes its bound ATP, resulting in the formation of a stable complex. GrpE releases ADP from DnaK; ATP binding to DnaK triggers the release of the substrate protein, thus completing the reaction cycle. Several rounds of ATP-dependent interactions between DnaJ, DnaK and GrpE are required for fully efficient folding. This is Protein GrpE from Acholeplasma laidlawii (strain PG-8A).